Consider the following 500-residue polypeptide: Protein dcd1B (500 aa).

An N-terminal signal peptide occupies residues 1-20; it reads MNLIKLFIICCLLISITVKS. Asn284, Asn331, Asn441, Asn459, Asn474, and Asn475 each carry an N-linked (GlcNAc...) asparagine glycan. The disordered stretch occupies residues 464–500; sequence FSEQPPLPPPNNSSSSDSNSNSNSDSSSSSDSNSNSN. Residues 475 to 500 show a composition bias toward low complexity; that stretch reads NSSSSDSNSNSNSDSSSSSDSNSNSN.

It localises to the secreted. In Dictyostelium discoideum (Social amoeba), this protein is Protein dcd1B (dcd1B).